A 118-amino-acid polypeptide reads, in one-letter code: Large ribosomal subunit protein bL20 (118 aa).

It belongs to the bacterial ribosomal protein bL20 family. Part of the 50S ribosomal subunit. Contacts proteins L13 and L21.

Binds directly to 23S rRNA, probably serving to organize its structure. This chain is Large ribosomal subunit protein bL20 (rplT), found in Deinococcus radiodurans (strain ATCC 13939 / DSM 20539 / JCM 16871 / CCUG 27074 / LMG 4051 / NBRC 15346 / NCIMB 9279 / VKM B-1422 / R1).